The sequence spans 94 residues: Protein RnfH (94 aa).

This sequence belongs to the UPF0125 (RnfH) family.

The chain is Protein RnfH from Sodalis glossinidius (strain morsitans).